A 55-amino-acid polypeptide reads, in one-letter code: ATP synthase protein 8 (55 aa).

A helical membrane pass occupies residues 7–24 (NPWFFIMIISWLTYSMII). The segment at 34 to 55 (TNPPARKEPTTNTTTPWNWPWT) is disordered. The span at 43-55 (TTNTTTPWNWPWT) shows a compositional bias: low complexity.

This sequence belongs to the ATPase protein 8 family. In terms of assembly, F-type ATPases have 2 components, CF(1) - the catalytic core - and CF(0) - the membrane proton channel.

It is found in the mitochondrion membrane. In terms of biological role, mitochondrial membrane ATP synthase (F(1)F(0) ATP synthase or Complex V) produces ATP from ADP in the presence of a proton gradient across the membrane which is generated by electron transport complexes of the respiratory chain. F-type ATPases consist of two structural domains, F(1) - containing the extramembraneous catalytic core and F(0) - containing the membrane proton channel, linked together by a central stalk and a peripheral stalk. During catalysis, ATP synthesis in the catalytic domain of F(1) is coupled via a rotary mechanism of the central stalk subunits to proton translocation. Part of the complex F(0) domain. Minor subunit located with subunit a in the membrane. In Vireo altiloquus (Black-whiskered vireo), this protein is ATP synthase protein 8 (MT-ATP8).